Here is a 426-residue protein sequence, read N- to C-terminus: Glutamate-1-semialdehyde 2,1-aminomutase (426 aa).

Position 265 is an N6-(pyridoxal phosphate)lysine (Lys-265).

Belongs to the class-III pyridoxal-phosphate-dependent aminotransferase family. HemL subfamily. As to quaternary structure, homodimer. Requires pyridoxal 5'-phosphate as cofactor.

It is found in the cytoplasm. The enzyme catalyses (S)-4-amino-5-oxopentanoate = 5-aminolevulinate. It participates in porphyrin-containing compound metabolism; protoporphyrin-IX biosynthesis; 5-aminolevulinate from L-glutamyl-tRNA(Glu): step 2/2. The chain is Glutamate-1-semialdehyde 2,1-aminomutase from Yersinia pestis bv. Antiqua (strain Antiqua).